The following is a 630-amino-acid chain: MTDTNHSSMRQHSLQSLAIAAIGVVFGDIGTSPLYSLKEAFSPAHGIPLTPSAILGVISLLFWAIILVVGIKYVLFVMRADNNGEGGVLALMALSLRPLNPKSRITGLMMALGIFGACMFYGDAVITPAISVMSAVEGLEVATPQLSHLVLPITIVILIALFWIQRHGTATVGKLFGPIMLLWFVTIAALGIYHIARAPMIVSAINPYYAFSFMSEHVLLAYVVLGSVVLVLTGAEALYADMGHFGAKPIRLAAYVLVMPSLVLNYFGQGALLLLDPKAIENPFFLLAPQWAALPLVVLSTVATVIASQAVISGAYSLTSQAIQLGYVPRMKILHTSELAIGQIYVPVVNWLLLFVILCIVIGFKSSDNLAAAYGIAVTATMVITTILAAVVMVKVWNWNKLLVAMIIGVFLVIDLGFFGANLLKVEQGGWLPLGIGALLFFLLMTWYKGRHIVKERTAADGIPLAPFLQGLLAHPPHRVSGTAIYLTGNDTLVPVSLLHNLKHNKVLHERTIFMTFVTRDIPYVKDHERVTVHDAGEGLYIVKAEYGFNETPDVKAVLEEVARQRGMTFELMDTSFFLARETVVPTHLPGMSIWRERVFAWMHQNAAKPTDFFAIPANRVVELGTKIEI.

The next 12 membrane-spanning stretches (helical) occupy residues 17–37 (LAIA…LYSL), 51–71 (PSAI…VVGI), 105–125 (ITGL…GDAV), 144–164 (PQLS…LFWI), 175–195 (LFGP…IYHI), 218–238 (VLLA…AEAL), 255–275 (YVLV…LLLL), 283–303 (PFFL…STVA), 344–364 (IYVP…VIGF), 374–394 (YGIA…VVMV), 402–422 (LLVA…FGAN), and 428–448 (QGGW…MTWY).

This sequence belongs to the HAK/KUP transporter (TC 2.A.72) family.

Its subcellular location is the cell inner membrane. The enzyme catalyses K(+)(in) + H(+)(in) = K(+)(out) + H(+)(out). Its function is as follows. Transport of potassium into the cell. Likely operates as a K(+):H(+) symporter. The chain is Probable potassium transport system protein Kup from Burkholderia mallei (strain NCTC 10247).